The chain runs to 459 residues: MPGFDRISELPESLITQILLCLPTKDSVKTSVLSTRWKNLWLNVPGLDLTCSDFPFEDEEYEQVFINFIDRFLEFNPESRLQTFEVDYKRREIRGFKDRIGTAINRGIRLLDAVSSTMYWEEECIMYPYLEFMPLNLFTSKTLVTLKLRDSALNDPGLLSMPCLKFMILREVRWSGTMSLEKLVSGCPVLEDLTLVRTLICHIDDDELPVTRVRSRSLKTFYVPLAYGVGCRSRVPDKVLEIDAPGLENMTLKEDHFDGIVVKNLTSLFMIELNIKFAVDYRRSFDPEDLSKRNEIGDFLTGISRARHMIISQKTVKALESYSKVGSIPKFNNLSHLKAVFPSPLLPFLPAFLESFPNLKNLILKIAFAKDDETEELNLINVPRCIVSTLECVEIKGLFEWEEEEMKIARYFLENAAVLKKLTMSFIDYPRYASNSDVYEDLDKLTKRSQQCRIIVDDE.

In terms of domain architecture, F-box spans 4-50 (FDRISELPESLITQILLCLPTKDSVKTSVLSTRWKNLWLNVPGLDLT). Residues 374-426 (TEELNLINVPRCIVSTLECVEIKGLFEWEEEEMKIARYFLENAAVLKKLTMSF) form the FBD domain.

This Arabidopsis thaliana (Mouse-ear cress) protein is FBD-associated F-box protein At5g27750.